The chain runs to 359 residues: Protein RecA (359 aa).

ATP is bound at residue 74 to 81 (GPESSGKT).

The protein belongs to the RecA family.

It localises to the cytoplasm. In terms of biological role, can catalyze the hydrolysis of ATP in the presence of single-stranded DNA, the ATP-dependent uptake of single-stranded DNA by duplex DNA, and the ATP-dependent hybridization of homologous single-stranded DNAs. It interacts with LexA causing its activation and leading to its autocatalytic cleavage. The protein is Protein RecA of Anaplasma marginale (strain St. Maries).